The following is a 270-amino-acid chain: GTP cyclohydrolase FolE2 2 (270 aa).

The protein belongs to the GTP cyclohydrolase IV family.

The catalysed reaction is GTP + H2O = 7,8-dihydroneopterin 3'-triphosphate + formate + H(+). Its pathway is cofactor biosynthesis; 7,8-dihydroneopterin triphosphate biosynthesis; 7,8-dihydroneopterin triphosphate from GTP: step 1/1. Converts GTP to 7,8-dihydroneopterin triphosphate. The polypeptide is GTP cyclohydrolase FolE2 2 (Dechloromonas aromatica (strain RCB)).